The primary structure comprises 456 residues: Transcription factor bHLH62 (456 aa).

The span at 159 to 185 (RTNSPFPINNEPPITTNEKMPRVSSSP) shows a compositional bias: polar residues. The segment at 159–254 (RTNSPFPINN…KTKSIDPYKD (96 aa)) is disordered. Positions 223-254 (KEIEEKEDSDPKRCKKSEENGDKTKSIDPYKD) are enriched in basic and acidic residues. In terms of domain architecture, bHLH spans 264–314 (QATDSHSLAERVRREKISERMKLLQDLVPGCNKVTGKALMLDEIINYVQSL).

In terms of assembly, homodimer. As to expression, expressed constitutively in roots, leaves, stems, and flowers.

Its subcellular location is the nucleus. The sequence is that of Transcription factor bHLH62 (BHLH62) from Arabidopsis thaliana (Mouse-ear cress).